Reading from the N-terminus, the 1355-residue chain is Patatin-like phospholipase domain-containing protein 6 (1355 aa).

The Lumenal segment spans residues 1 to 43 (MGTPSHELNTTSSGAEVIQKTLEEGLGRRICVAQPVPFVPQVL). The N-linked (GlcNAc...) asparagine glycan is linked to Asn-9. A helical membrane pass occupies residues 44–64 (GVMIGAGVAVLVTAVLILLVV). Over 65–1355 (RRLRVQKTPA…QETPSSVADA (1291 aa)) the chain is Cytoplasmic. 179-306 (VLGHFEKPLF…VRVVQIIMVR (128 aa)) contacts a nucleoside 3',5'-cyclic phosphate. Ser-338 is modified (phosphoserine). The interval 338-395 (SPGLPTRTSPVRGSKRVVSTSGTEDTSKETSGRPLDSIGAPLPGPAGDPVKPTSLEAP) is disordered. Residues 343-361 (TRTSPVRGSKRVVSTSGTE) are compositionally biased toward polar residues. The residue at position 345 (Thr-345) is a Phosphothreonine. Residues Ser-346, Ser-356, and Ser-405 each carry the phosphoserine modification. A nucleoside 3',5'-cyclic phosphate-binding positions include 492 to 614 (ELAK…VAAR) and 610 to 730 (TVAA…LSQK). In terms of domain architecture, PNPLA spans 961 to 1127 (LVLGGGGARG…INNLPADIAR (167 aa)). Positions 965–970 (GGGARG) match the GXGXXG motif. Residues 992–996 (GTSIG) carry the GXSXG motif. Ser-994 acts as the Nucleophile in catalysis. Catalysis depends on Asp-1114, which acts as the Proton acceptor. The short motif at 1114-1116 (DGG) is the DGA/G element. The tract at residues 1286 to 1355 (SYVSDGCADG…QETPSSVADA (70 aa)) is disordered. Over residues 1293–1309 (ADGEESDCLTEYEEDAG) the composition is skewed to acidic residues.

The protein belongs to the NTE family. Glycosylated. As to expression, expressed in brain, testes and kidney (at protein level). Expressed ubiquitously in brain of young mice. Reaching adulthood, there is a most prominent expression in Purkinje cells, granule cells and pyramidal neurons of the hippocampus and some large neurons in the medulla oblongata, nucleus dentatus and pons.

Its subcellular location is the endoplasmic reticulum membrane. It carries out the reaction a 1-acyl-sn-glycero-3-phosphocholine + H2O = sn-glycerol 3-phosphocholine + a fatty acid + H(+). The enzyme catalyses 1-hexadecanoyl-sn-glycero-3-phosphocholine + H2O = sn-glycerol 3-phosphocholine + hexadecanoate + H(+). It catalyses the reaction 1-hexadecanoyl-sn-glycero-3-phosphate + H2O = sn-glycerol 3-phosphate + hexadecanoate + H(+). The catalysed reaction is 1-(9Z-octadecenoyl)-sn-glycero-3-phosphocholine + H2O = sn-glycerol 3-phosphocholine + (9Z)-octadecenoate + H(+). It carries out the reaction 1-hexadecanoylglycerol + H2O = glycerol + hexadecanoate + H(+). The enzyme catalyses 2-hexadecanoylglycerol + H2O = glycerol + hexadecanoate + H(+). It catalyses the reaction 1-(9Z-octadecenoyl)-glycerol + H2O = glycerol + (9Z)-octadecenoate + H(+). The catalysed reaction is 2-(9Z-octadecenoyl)-glycerol + H2O = glycerol + (9Z)-octadecenoate + H(+). It carries out the reaction 2-(5Z,8Z,11Z,14Z-eicosatetraenoyl)-glycerol + H2O = glycerol + (5Z,8Z,11Z,14Z)-eicosatetraenoate + H(+). Its activity is regulated as follows. Inhibited by a series a OPs such as mipafox (MPX), phenyl saligenin phosphate (PSP), phenyl dipentyl phosphinate (PDPP), diisopropyl fluorophosphate and paraoxon. Its function is as follows. Phospholipase B that deacylates intracellular phosphatidylcholine (PtdCho), generating glycerophosphocholine (GroPtdCho). This deacylation occurs at both sn-2 and sn-1 positions of PtdCho. Catalyzes the hydrolysis of several naturally occurring membrane-associated lipids. Hydrolyzes lysophospholipids and monoacylglycerols, preferring the 1-acyl to the 2-acyl isomer. Does not catalyze hydrolysis of di- or triacylglycerols or fatty acid amides. This Mus musculus (Mouse) protein is Patatin-like phospholipase domain-containing protein 6 (Pnpla6).